We begin with the raw amino-acid sequence, 285 residues long: 2-dehydro-3-deoxyphosphooctonate aldolase (285 aa).

Belongs to the KdsA family.

It is found in the cytoplasm. The enzyme catalyses D-arabinose 5-phosphate + phosphoenolpyruvate + H2O = 3-deoxy-alpha-D-manno-2-octulosonate-8-phosphate + phosphate. The protein operates within carbohydrate biosynthesis; 3-deoxy-D-manno-octulosonate biosynthesis; 3-deoxy-D-manno-octulosonate from D-ribulose 5-phosphate: step 2/3. It functions in the pathway bacterial outer membrane biogenesis; lipopolysaccharide biosynthesis. This chain is 2-dehydro-3-deoxyphosphooctonate aldolase, found in Variovorax paradoxus (strain S110).